We begin with the raw amino-acid sequence, 394 residues long: Elongation factor Tu (394 aa).

In terms of domain architecture, tr-type G spans 10–204 (KPHVNVGTIG…AMDDYIPAPE (195 aa)). Positions 19 to 26 (GHVDHGKT) are G1. A GTP-binding site is contributed by 19 to 26 (GHVDHGKT). Thr26 is a Mg(2+) binding site. Residues 60–64 (GITIN) are G2. Positions 81-84 (DCPG) are G3. GTP is bound by residues 81–85 (DCPGH) and 136–139 (NKCD). The tract at residues 136–139 (NKCD) is G4. The interval 174–176 (SAL) is G5.

It belongs to the TRAFAC class translation factor GTPase superfamily. Classic translation factor GTPase family. EF-Tu/EF-1A subfamily. Monomer.

The protein resides in the cytoplasm. It carries out the reaction GTP + H2O = GDP + phosphate + H(+). In terms of biological role, GTP hydrolase that promotes the GTP-dependent binding of aminoacyl-tRNA to the A-site of ribosomes during protein biosynthesis. This chain is Elongation factor Tu, found in Francisella tularensis subsp. tularensis (strain FSC 198).